The chain runs to 354 residues: MTGDNLVSAYVSDAERDVEASVRPRRLAEFIAQERVRDQLDLLLQGALRRGSPPDHILLSGPPGLGKTSLANIVAAELGTSIRVTSGPAIERSGDLAAILTSLGEGDVLFIDEIHRIARPAEELLYSAMEDFRVDVVVGKGPGATAIPLDVEPFTLVGATTRAGLLTGPMRDRFGFVAHLDFYSPADLETLLHRSARILGVPITGDGAVEISGRSRGTPRIANRLLRRVRDFAEVRADGVVTREAARAALLVYDVDALGLDRLDRQVLTALVDLFRGGPVGLSTLAVAVGEQPDTVEEVCEPFLVRAGLLARTPRGRVATEAAWRHLGRTPPNGIFGSDAPPASDLFSVEPDQP.

A large ATPase domain (RuvB-L) region spans residues 1–183 (MTGDNLVSAY…FGFVAHLDFY (183 aa)). Residues Arg-23, Gly-64, Lys-67, Thr-68, Ser-69, 130 to 132 (EDF), Arg-173, Tyr-183, and Arg-220 contribute to the ATP site. Residue Thr-68 participates in Mg(2+) binding. Residues 184–254 (SPADLETLLH…AARAALLVYD (71 aa)) form a small ATPAse domain (RuvB-S) region. A head domain (RuvB-H) region spans residues 257–354 (ALGLDRLDRQ…DLFSVEPDQP (98 aa)). DNA-binding residues include Arg-312 and Arg-317. Residues 330-354 (TPPNGIFGSDAPPASDLFSVEPDQP) form a disordered region.

It belongs to the RuvB family. Homohexamer. Forms an RuvA(8)-RuvB(12)-Holliday junction (HJ) complex. HJ DNA is sandwiched between 2 RuvA tetramers; dsDNA enters through RuvA and exits via RuvB. An RuvB hexamer assembles on each DNA strand where it exits the tetramer. Each RuvB hexamer is contacted by two RuvA subunits (via domain III) on 2 adjacent RuvB subunits; this complex drives branch migration. In the full resolvosome a probable DNA-RuvA(4)-RuvB(12)-RuvC(2) complex forms which resolves the HJ.

The protein localises to the cytoplasm. The catalysed reaction is ATP + H2O = ADP + phosphate + H(+). Functionally, the RuvA-RuvB-RuvC complex processes Holliday junction (HJ) DNA during genetic recombination and DNA repair, while the RuvA-RuvB complex plays an important role in the rescue of blocked DNA replication forks via replication fork reversal (RFR). RuvA specifically binds to HJ cruciform DNA, conferring on it an open structure. The RuvB hexamer acts as an ATP-dependent pump, pulling dsDNA into and through the RuvAB complex. RuvB forms 2 homohexamers on either side of HJ DNA bound by 1 or 2 RuvA tetramers; 4 subunits per hexamer contact DNA at a time. Coordinated motions by a converter formed by DNA-disengaged RuvB subunits stimulates ATP hydrolysis and nucleotide exchange. Immobilization of the converter enables RuvB to convert the ATP-contained energy into a lever motion, pulling 2 nucleotides of DNA out of the RuvA tetramer per ATP hydrolyzed, thus driving DNA branch migration. The RuvB motors rotate together with the DNA substrate, which together with the progressing nucleotide cycle form the mechanistic basis for DNA recombination by continuous HJ branch migration. Branch migration allows RuvC to scan DNA until it finds its consensus sequence, where it cleaves and resolves cruciform DNA. This is Holliday junction branch migration complex subunit RuvB from Salinispora arenicola (strain CNS-205).